The chain runs to 205 residues: N-(5'-phosphoribosyl)anthranilate isomerase (205 aa).

It belongs to the TrpF family.

It carries out the reaction N-(5-phospho-beta-D-ribosyl)anthranilate = 1-(2-carboxyphenylamino)-1-deoxy-D-ribulose 5-phosphate. It functions in the pathway amino-acid biosynthesis; L-tryptophan biosynthesis; L-tryptophan from chorismate: step 3/5. The sequence is that of N-(5'-phosphoribosyl)anthranilate isomerase from Thermotoga neapolitana (strain ATCC 49049 / DSM 4359 / NBRC 107923 / NS-E).